Consider the following 361-residue polypeptide: Alanine racemase 2 (361 aa).

Lys-30 (proton acceptor; specific for D-alanine) is an active-site residue. Residue Lys-30 is modified to N6-(pyridoxal phosphate)lysine. Residue Arg-122 participates in substrate binding. The active-site Proton acceptor; specific for L-alanine is Tyr-256. Met-303 is a binding site for substrate.

It belongs to the alanine racemase family. Requires pyridoxal 5'-phosphate as cofactor.

It carries out the reaction L-alanine = D-alanine. It participates in amino-acid biosynthesis; D-alanine biosynthesis; D-alanine from L-alanine: step 1/1. In terms of biological role, catalyzes the interconversion of L-alanine and D-alanine. May also act on other amino acids. In Staphylococcus aureus (strain COL), this protein is Alanine racemase 2 (alr2).